A 411-amino-acid chain; its full sequence is Serine--tRNA ligase (411 aa).

Position 226 to 228 (226 to 228 (TSE)) interacts with L-serine. 257–259 (RKE) contacts ATP. L-serine is bound at residue Glu-280. 344–347 (EISS) lines the ATP pocket. Residue Ser-379 participates in L-serine binding.

It belongs to the class-II aminoacyl-tRNA synthetase family. Type-1 seryl-tRNA synthetase subfamily. As to quaternary structure, homodimer. The tRNA molecule binds across the dimer.

It is found in the cytoplasm. It carries out the reaction tRNA(Ser) + L-serine + ATP = L-seryl-tRNA(Ser) + AMP + diphosphate + H(+). It catalyses the reaction tRNA(Sec) + L-serine + ATP = L-seryl-tRNA(Sec) + AMP + diphosphate + H(+). It participates in aminoacyl-tRNA biosynthesis; selenocysteinyl-tRNA(Sec) biosynthesis; L-seryl-tRNA(Sec) from L-serine and tRNA(Sec): step 1/1. Functionally, catalyzes the attachment of serine to tRNA(Ser). Is also able to aminoacylate tRNA(Sec) with serine, to form the misacylated tRNA L-seryl-tRNA(Sec), which will be further converted into selenocysteinyl-tRNA(Sec). The protein is Serine--tRNA ligase of Campylobacter jejuni subsp. jejuni serotype O:6 (strain 81116 / NCTC 11828).